Here is a 681-residue protein sequence, read N- to C-terminus: Potassium-transporting ATPase ATP-binding subunit (681 aa).

Transmembrane regions (helical) follow at residues 30-50, 59-79, 216-236, and 255-275; these read LLVY…FFGI, LAIA…EAIA, ILLV…LPFT, and IALL…SIGI. Aspartate 306 serves as the catalytic 4-aspartylphosphate intermediate. Residues aspartate 343, glutamate 347, 376–383, and lysine 394 contribute to the ATP site; that span reads FTATTRMS. Mg(2+) is bound by residues aspartate 517 and aspartate 521. Helical transmembrane passes span 587 to 607, 615 to 635, and 661 to 681; these read FAII…LNLM, AILS…PLSL, and LIAP…LGIV.

It belongs to the cation transport ATPase (P-type) (TC 3.A.3) family. Type IA subfamily. The system is composed of three essential subunits: KdpA, KdpB and KdpC.

Its subcellular location is the cell membrane. The catalysed reaction is K(+)(out) + ATP + H2O = K(+)(in) + ADP + phosphate + H(+). Its function is as follows. Part of the high-affinity ATP-driven potassium transport (or Kdp) system, which catalyzes the hydrolysis of ATP coupled with the electrogenic transport of potassium into the cytoplasm. This subunit is responsible for energy coupling to the transport system and for the release of the potassium ions to the cytoplasm. The sequence is that of Potassium-transporting ATPase ATP-binding subunit from Listeria monocytogenes serotype 4b (strain CLIP80459).